We begin with the raw amino-acid sequence, 881 residues long: Armadillo repeat-containing protein 3 (881 aa).

12 ARM repeats span residues aspartate 15–leucine 54, glutamate 57–serine 96, serine 98–valine 138, tyrosine 140–glutamine 179, phenylalanine 181–cysteine 220, lysine 222–glutamate 262, methionine 264–tyrosine 304, proline 306–glutamate 345, asparagine 346–threonine 385, proline 388–threonine 427, glutamate 429–cysteine 468, and valine 470–glycine 509. 2 S-palmitoyl cysteine lipidation sites follow: cysteine 507 and cysteine 518. Positions asparagine 605–serine 659 are disordered. Positions aspartate 622 to arginine 636 are enriched in low complexity.

In terms of assembly, homodimer. Interacts with PIK3C3, PIK3R4 and BECN1. Interacts (via ARM domains) with ATG14. Palmitoylation is important for its function in autophagy. As to expression, testis-specific.

Essential for male fertility and sperm motility. During spermatogenesis, promotes the autophagic degradation of excessive ribosomes, providing energy resources for mitochondria and thus ensuring sperm flagellar motility. The sequence is that of Armadillo repeat-containing protein 3 (Armc3) from Mus musculus (Mouse).